We begin with the raw amino-acid sequence, 408 residues long: LL-diaminopimelate aminotransferase (408 aa).

Substrate is bound by residues tyrosine 15 and glycine 42. Pyridoxal 5'-phosphate is bound by residues tyrosine 72, 108 to 109 (SK), tyrosine 132, asparagine 187, tyrosine 218, and 246 to 248 (SFS). Substrate contacts are provided by lysine 109, tyrosine 132, and asparagine 187. Lysine 249 bears the N6-(pyridoxal phosphate)lysine mark. Residues arginine 257 and asparagine 292 each coordinate pyridoxal 5'-phosphate. Positions 292 and 388 each coordinate substrate.

This sequence belongs to the class-I pyridoxal-phosphate-dependent aminotransferase family. LL-diaminopimelate aminotransferase subfamily. Homodimer. It depends on pyridoxal 5'-phosphate as a cofactor.

The enzyme catalyses (2S,6S)-2,6-diaminopimelate + 2-oxoglutarate = (S)-2,3,4,5-tetrahydrodipicolinate + L-glutamate + H2O + H(+). It participates in amino-acid biosynthesis; L-lysine biosynthesis via DAP pathway; LL-2,6-diaminopimelate from (S)-tetrahydrodipicolinate (aminotransferase route): step 1/1. Functionally, involved in the synthesis of meso-diaminopimelate (m-DAP or DL-DAP), required for both lysine and peptidoglycan biosynthesis. Catalyzes the direct conversion of tetrahydrodipicolinate to LL-diaminopimelate. The sequence is that of LL-diaminopimelate aminotransferase from Prochlorococcus marinus (strain AS9601).